Here is a 679-residue protein sequence, read N- to C-terminus: Protein CASP (679 aa).

The Cytoplasmic segment spans residues 1–614 (MDTSVYSHAL…VILQNKMTRM (614 aa)). Coiled coils occupy residues 14–90 (AKAD…EKVL) and 178–341 (RNWK…NYSD). S364 bears the Phosphoserine mark. Residues 385–444 (ANKKLQATLAEYRSKSTAQEEERNELKKSVDQLKQQIATLKEANEKLETDLEKVENVSPH) adopt a coiled-coil conformation. Residues S450 and S453 each carry the phosphoserine modification. The stretch at 492-540 (IVTKQRDRFRSRNMDLEKQLRQGNSEKGKLKLEISKLKGDNTKLYERIR) forms a coiled coil. At S555 the chain carries Phosphoserine. Residues 615–635 (VFLFYCIGLHGLVFMMSMYVI) form a helical; Anchor for type IV membrane protein membrane-spanning segment. Over 636–679 (NISGYMTPEVGIVQSAKSSSNLNGGLGGAEKVAAGVGSVHGINR) the chain is Lumenal.

Belongs to the CASP family.

It is found in the golgi apparatus membrane. Functionally, may be involved in intra-Golgi transport. The chain is Protein CASP (COY1) from Saccharomyces cerevisiae (strain ATCC 204508 / S288c) (Baker's yeast).